Consider the following 69-residue polypeptide: Putative membrane protein insertion efficiency factor (69 aa).

The protein belongs to the UPF0161 family.

Its subcellular location is the cell inner membrane. Could be involved in insertion of integral membrane proteins into the membrane. The protein is Putative membrane protein insertion efficiency factor of Azoarcus sp. (strain BH72).